Reading from the N-terminus, the 144-residue chain is Large ribosomal subunit protein uL15 (144 aa).

Residues 1–54 (MRLNTLSPAPGRVTSRKRVGRGIGSGLGKTAGRGHKGLKSRSGGTVKPGFEGGQ) are disordered. Over residues 21–31 (RGIGSGLGKTA) the composition is skewed to gly residues.

It belongs to the universal ribosomal protein uL15 family. As to quaternary structure, part of the 50S ribosomal subunit.

In terms of biological role, binds to the 23S rRNA. This Teredinibacter turnerae (strain ATCC 39867 / T7901) protein is Large ribosomal subunit protein uL15.